A 78-amino-acid chain; its full sequence is Delta-conotoxin-like TxMKLT1-0111 (78 aa).

The N-terminal stretch at M1–A22 is a signal peptide. A propeptide spanning residues D23–N49 is cleaved from the precursor. 3 cysteine pairs are disulfide-bonded: C53–C68, C60–C72, and C67–C77.

Belongs to the conotoxin O1 superfamily. In terms of tissue distribution, expressed by the venom duct.

The protein resides in the secreted. In terms of biological role, delta-conotoxins bind to site 6 of voltage-gated sodium channels (Nav) and inhibit the inactivation process. The polypeptide is Delta-conotoxin-like TxMKLT1-0111 (Conus textile (Cloth-of-gold cone)).